Reading from the N-terminus, the 352-residue chain is Photosystem II D2 protein 2 (352 aa).

A helical membrane pass occupies residues 40 to 60 (CAYLALGGWLTGTSFVTSWYT). His-117 contributes to the chlorophyll a binding site. A helical membrane pass occupies residues 124–140 (GFMLRQFEIARLVGVRP). 2 residues coordinate pheophytin a: Gln-129 and Asn-142. Residues 152 to 165 (VFVSVFLMYPLGQS) traverse the membrane as a helical segment. His-197 is a binding site for chlorophyll a. The chain crosses the membrane as a helical span at residues 207–227 (GALLCAIHGATVENTLFEDSE). Residues His-214 and Phe-261 each contribute to the a plastoquinone site. Residue His-214 participates in Fe cation binding. Residue His-268 coordinates Fe cation. The chain crosses the membrane as a helical span at residues 278-294 (GLWMSSIGIVGLALNLR).

This sequence belongs to the reaction center PufL/M/PsbA/D family. PSII is composed of 1 copy each of membrane proteins PsbA, PsbB, PsbC, PsbD, PsbE, PsbF, PsbH, PsbI, PsbJ, PsbK, PsbL, PsbM, PsbT, PsbX, PsbY, PsbZ, Psb30/Ycf12, peripheral proteins PsbO, CyanoQ (PsbQ), PsbU, PsbV and a large number of cofactors. It forms dimeric complexes. The D1/D2 heterodimer binds P680, chlorophylls that are the primary electron donor of PSII, and subsequent electron acceptors. It shares a non-heme iron and each subunit binds pheophytin, quinone, additional chlorophylls, carotenoids and lipids. There is also a Cl(-1) ion associated with D1 and D2, which is required for oxygen evolution. The PSII complex binds additional chlorophylls, carotenoids and specific lipids. is required as a cofactor.

It is found in the cellular thylakoid membrane. It catalyses the reaction 2 a plastoquinone + 4 hnu + 2 H2O = 2 a plastoquinol + O2. Functionally, photosystem II (PSII) is a light-driven water:plastoquinone oxidoreductase that uses light energy to abstract electrons from H(2)O, generating O(2) and a proton gradient subsequently used for ATP formation. It consists of a core antenna complex that captures photons, and an electron transfer chain that converts photonic excitation into a charge separation. The D1/D2 (PsbA/PsbD) reaction center heterodimer binds P680, the primary electron donor of PSII as well as several subsequent electron acceptors. D2 is needed for assembly of a stable PSII complex. This is Photosystem II D2 protein 2 from Synechococcus sp. (strain ATCC 27144 / PCC 6301 / SAUG 1402/1) (Anacystis nidulans).